The primary structure comprises 235 residues: Phosphatidylserine decarboxylase proenzyme (235 aa).

Residue S204 is the Schiff-base intermediate with substrate; via pyruvic acid of the active site. S204 carries the pyruvic acid (Ser); by autocatalysis modification.

The protein belongs to the phosphatidylserine decarboxylase family. PSD-A subfamily. In terms of assembly, heterodimer of a large membrane-associated beta subunit and a small pyruvoyl-containing alpha subunit. The cofactor is pyruvate. Post-translationally, is synthesized initially as an inactive proenzyme. Formation of the active enzyme involves a self-maturation process in which the active site pyruvoyl group is generated from an internal serine residue via an autocatalytic post-translational modification. Two non-identical subunits are generated from the proenzyme in this reaction, and the pyruvate is formed at the N-terminus of the alpha chain, which is derived from the carboxyl end of the proenzyme. The post-translation cleavage follows an unusual pathway, termed non-hydrolytic serinolysis, in which the side chain hydroxyl group of the serine supplies its oxygen atom to form the C-terminus of the beta chain, while the remainder of the serine residue undergoes an oxidative deamination to produce ammonia and the pyruvoyl prosthetic group on the alpha chain.

Its subcellular location is the cell membrane. It carries out the reaction a 1,2-diacyl-sn-glycero-3-phospho-L-serine + H(+) = a 1,2-diacyl-sn-glycero-3-phosphoethanolamine + CO2. It functions in the pathway phospholipid metabolism; phosphatidylethanolamine biosynthesis; phosphatidylethanolamine from CDP-diacylglycerol: step 2/2. Catalyzes the formation of phosphatidylethanolamine (PtdEtn) from phosphatidylserine (PtdSer). The sequence is that of Phosphatidylserine decarboxylase proenzyme from Mycobacterium sp. (strain KMS).